Reading from the N-terminus, the 409-residue chain is Transcriptional regulator GME11370 (409 aa).

Residues 17 to 44 (CHACAASKLKCSKEKPSCARCLKRNKPC) constitute a DNA-binding region (zn(2)-C6 fungal-type). The segment at 49–83 (TRRAGRHHGSRSKKVPTISPASAPEPQPFSTTPPD) is disordered. Over residues 51 to 62 (RAGRHHGSRSKK) the composition is skewed to basic residues.

The protein localises to the nucleus. Transcriptional regulator; part of the gene cluster that mediates the biosynthesis of dibenzodioxocinones such as pestalotiollide B, a novel class of inhibitors against cholesterol ester transfer protein (CEPT). This chain is Transcriptional regulator GME11370, found in Pestalotiopsis microspora.